The sequence spans 787 residues: Longitudinals lacking protein, isoforms A/B/D/L (787 aa).

In terms of domain architecture, BTB spans 32 to 97; the sequence is VDCTLAAEGK…MYRGEVNISQ (66 aa). Disordered stretches follow at residues 115–200, 228–340, 506–560, and 653–677; these read LSDN…SSVL, SSGP…ASAS, AKDV…SGGK, and TTGS…SVLG. Composition is skewed to low complexity over residues 162–175, 228–251, 263–293, 329–340, 537–560, and 659–668; these read SGDV…SSSP, SSGP…LTST, TSST…QTTS, NSATGPNPASAS, HSSS…SGGK, and SPSNSGHNNS. The segment at 685–707 adopts a C2H2-type 1; degenerate zinc-finger fold; sequence HPCPVCGRVYKLKSSLRNHQKWE. The segment at 714–737 adopts a C2H2-type 2 zinc-finger fold; the sequence is FQCPFCVYRAKQKMHIGRHMERMH.

As to quaternary structure, isoform D interacts with JIL-1. By stage 11, isoform B is expressed throughout the mesoderm, whereas isoform A, isoform D and isoform L are expressed throughout the ectoderm. Expression becomes restricted during later stages; starting from stage 14 to 16, isoform B is expressed in muscle. Isoform A, isoform D, and at low levels isoform B, are expressed in the CNS. Expression is also seen in specific types of cells in the embryo; isoform A and isoform L are expressed in a dynamic pattern in the ventral neurogenic region starting at stage 7. Isoform L is expressed around the tracheal pits at stage 11.

The protein resides in the nucleus. Putative transcription factor required for axon growth and guidance in the central and peripheral nervous systems. Repels CNS axons away from the midline by promoting the expression of the midline repellent sli and its receptor robo. This Drosophila melanogaster (Fruit fly) protein is Longitudinals lacking protein, isoforms A/B/D/L.